We begin with the raw amino-acid sequence, 492 residues long: Solute carrier family 2, facilitated glucose transporter member 1 (492 aa).

An N-acetylmethionine modification is found at M1. Residues M1–R11 lie on the Cytoplasmic side of the membrane. A helical transmembrane segment spans residues L12–I33. Topologically, residues N34 to S66 are extracellular. A glycan (N-linked (GlcNAc...) asparagine) is linked at N45. Residues L67 to V87 form a helical membrane-spanning segment. Residues N88–F90 lie on the Cytoplasmic side of the membrane. Residues G91 to F112 traverse the membrane as a helical segment. The Extracellular portion of the chain corresponds to S113–E120. The chain crosses the membrane as a helical span at residues M121 to V144. T137 is a cytochalasin B binding site. Topologically, residues G145 to A155 are cytoplasmic. The chain crosses the membrane as a helical span at residues L156 to L176. Over D177–L185 the chain is Extracellular. A helical transmembrane segment spans residues W186–F206. Residues C207–P271 lie on the Cytoplasmic side of the membrane. S226 is modified (phosphoserine; by PKC/PRKCB). The chain crosses the membrane as a helical span at residues I272–Y293. A cytochalasin B-binding site is contributed by Q282. D-glucose contacts are provided by residues Q282–Q283 and N288. Over S294–P306 the chain is Extracellular. Residues V307–V328 traverse the membrane as a helical segment. N317 contributes to the D-glucose binding site. The Cytoplasmic segment spans residues E329–R334. The chain crosses the membrane as a helical span at residues T335–L355. The Extracellular portion of the chain corresponds to A356–S365. The helical transmembrane segment at Y366 to W388 threads the bilayer. D-glucose is bound at residue E380. W388 is a cytochalasin B binding site. Over F389–P401 the chain is Cytoplasmic. Residues A402 to F422 form a helical membrane-spanning segment. A cytochalasin B-binding site is contributed by N411. The Extracellular segment spans residues Q423 to C429. A helical transmembrane segment spans residues G430–F450. The Cytoplasmic segment spans residues K451 to V492. Position 465 is a phosphoserine (S465). The interval R468 to V492 is disordered. T478 carries the post-translational modification Phosphothreonine. S490 is modified (phosphoserine).

This sequence belongs to the major facilitator superfamily. Sugar transporter (TC 2.A.1.1) family. Glucose transporter subfamily. As to quaternary structure, interacts with GIPC (via PDZ domain). Found in a complex with ADD2, DMTN and SLC2A1. Interacts (via C-terminus cytoplasmic region) with DMTN isoform 2. Interacts with SNX27; the interaction is required when endocytosed to prevent degradation in lysosomes and promote recycling to the plasma membrane. Interacts with STOM. Interacts with SGTA (via Gln-rich region). Interacts with isoform 1 of BSG. Post-translationally, phosphorylation at Ser-226 by PKC promotes glucose uptake by increasing cell membrane localization. In terms of tissue distribution, detected in erythrocytes (at protein level). Expressed at variable levels in many human tissues.

Its subcellular location is the cell membrane. It is found in the melanosome. The protein localises to the photoreceptor inner segment. It carries out the reaction D-glucose(out) = D-glucose(in). It participates in carbohydrate degradation. With respect to regulation, the uptake of glucose is inhibited by cytochalasin B and Phe-amide core-scaffold inhibitors GLUT-i1 and GLUT-i2. These inhibitors bind in the central cavity of the inward-open state and overlap the glucose-binding site. Glucose uptake is increased in response to phorbol ester 12-O-tetradecanoylphorbol-13-acetate (TPA) treatment: TPA-induced glucose uptake requires phosphorylation at Ser-226. Interacts with SMIM43; the interaction may promote SLC2A1-mediated glucose transport to meet the energy needs of mesendoderm differentiation. In terms of biological role, facilitative glucose transporter, which is responsible for constitutive or basal glucose uptake. Has a very broad substrate specificity; can transport a wide range of aldoses including both pentoses and hexoses. Most important energy carrier of the brain: present at the blood-brain barrier and assures the energy-independent, facilitative transport of glucose into the brain. In association with BSG and NXNL1, promotes retinal cone survival by increasing glucose uptake into photoreceptors. Required for mesendoderm differentiation. The sequence is that of Solute carrier family 2, facilitated glucose transporter member 1 from Homo sapiens (Human).